Here is a 377-residue protein sequence, read N- to C-terminus: Presenilin-associated rhomboid-like protein, mitochondrial (377 aa).

The N-terminal 52 residues, 1-52, are a transit peptide targeting the mitochondrion; the sequence is MAWRGWAQRGWGCGQAWTLPVCGGSYEELTAALAPSRLLRRRFNFFIQQKCG. At 53 to 99 the chain is on the mitochondrial matrix side; sequence FRKAPRKVEPRRSDTSSEAYKRSALIPPVEETAFYPSPYPIRTLVKP. Residues Ser65 and Ser68 each carry the phosphoserine modification. Residues 100-119 form a helical membrane-spanning segment; sequence LFFTVGFTGCAFGSAAIWQY. The Mitochondrial intermembrane segment spans residues 120-165; it reads ESLKSKVQSYFDGIKADWLDSIRPQKEGDFRKEINKWWNNLSDGQR. A helical membrane pass occupies residues 166–185; that stretch reads TVTGIIAANVFVFCLWRVPS. The Mitochondrial matrix segment spans residues 186–205; sequence LQRTMIRYFTSNPASKVLCS. Residues 206-228 traverse the membrane as a helical segment; sequence PMLLSTFSHFSLFHMAANMYVLW. Over 229-242 the chain is Mitochondrial intermembrane; that stretch reads SFSSSIVNILGQEQ. Residues 243–260 form a helical membrane-spanning segment; the sequence is FMAVYLSAGVISTFVSYV. Topologically, residues 261 to 270 are mitochondrial matrix; that stretch reads CKVATGRYGP. A helical membrane pass occupies residues 271–287; that stretch reads SLGASGAIMTVLAAVCT. Ser275 serves as the catalytic Nucleophile. Residues 288-293 lie on the Mitochondrial intermembrane side of the membrane; the sequence is KIPEGR. A helical transmembrane segment spans residues 294–316; it reads LAIIFLPMFTFTAGNALKAIIAM. The Mitochondrial matrix segment spans residues 317–330; the sequence is DTAGMILGWKFFDH. A helical transmembrane segment spans residues 331–352; the sequence is AAHLGGALFGIWYITYGHELIW. Residue His333 is part of the active site. At 353–377 the chain is on the mitochondrial intermembrane side; sequence KNREPLVKIWHEMRTNSPKKGGGSK.

This sequence belongs to the peptidase S54 family. As to quaternary structure, interacts with PSEN1 and PSEN2. Binds OPA1. In terms of processing, P-beta is proteolytically processed (beta-cleavage) in a PARL-dependent manner.

It is found in the mitochondrion inner membrane. Its subcellular location is the nucleus. It carries out the reaction Cleaves type-1 transmembrane domains using a catalytic dyad composed of serine and histidine that are contributed by different transmembrane domains.. Functionally, required for the control of apoptosis during postnatal growth. Essential for proteolytic processing of an antiapoptotic form of OPA1 which prevents the release of mitochondrial cytochrome c in response to intrinsic apoptotic signals. Required for the maturation of PINK1 into its 52kDa mature form after its cleavage by mitochondrial-processing peptidase (MPP). Promotes cleavage of serine/threonine-protein phosphatase PGAM5 in damaged mitochondria in response to loss of mitochondrial membrane potential. Mediates differential cleavage of PINK1 and PGAM5 depending on the health status of mitochondria, disassociating from PINK1 and associating with PGAM5 in response to mitochondrial membrane potential loss. Required for processing of CLPB into a form with higher protein disaggregase activity by removing an autoinhibitory N-terminal peptide. Promotes processing of DIABLO/SMAC in the mitochondrion which is required for DIABLO apoptotic activity. Also required for cleavage of STARD7 and TTC19. Promotes changes in mitochondria morphology regulated by phosphorylation of P-beta domain. This is Presenilin-associated rhomboid-like protein, mitochondrial (PARL) from Bos taurus (Bovine).